The chain runs to 637 residues: ATP-dependent zinc metalloprotease FtsH (637 aa).

The Cytoplasmic portion of the chain corresponds to Met-1–Arg-6. A helical membrane pass occupies residues Ser-7–Ser-27. The Periplasmic portion of the chain corresponds to Asp-28–Thr-103. Residues Phe-104 to Phe-124 form a helical membrane-spanning segment. At Met-125–Ser-637 the chain is on the cytoplasmic side. Gly-195–Thr-202 contacts ATP. Zn(2+) is bound at residue His-417. Glu-418 is an active-site residue. Residues His-421 and Asp-495 each contribute to the Zn(2+) site.

It in the central section; belongs to the AAA ATPase family. This sequence in the C-terminal section; belongs to the peptidase M41 family. In terms of assembly, homohexamer. The cofactor is Zn(2+).

It localises to the cell inner membrane. In terms of biological role, acts as a processive, ATP-dependent zinc metallopeptidase for both cytoplasmic and membrane proteins. Plays a role in the quality control of integral membrane proteins. The protein is ATP-dependent zinc metalloprotease FtsH of Rickettsia prowazekii (strain Madrid E).